The sequence spans 530 residues: MAKVDLSKYGISNNIIVVYNPSYEDLYKAEINSENKGFEKGIVTNTGAVSVDTGKFTGRSPKDRYIVKDQITENTIWWDGNINKPISRTIWDNLKDLTIKQLNTAKKLYIIDAFCGTNNDTRMKVRFIVEVAWQAHFVTNMFIRPSNYELDHYGDPDFVVFNGSKTTNPKWKEQGLNSEIYILFNLTEKEQIIGGTWYGGEMKKGMFSMQNYYLPLKGIASMHCSANVGEKGDVAVFFGLSGTGKTTLSADPKRYLIGDDEHGWDDNGIFNYEGGCYAKVIDLSQKNEPDIWNAIRRDALLENVTVKADGTLDYSKVASKTENTRVSYPIHHINKIVLPSRAGHAKKIIYLSADAFGVLPPVSVLDEKSSQYHFLCGYTSKLAGTERGITEPIPSFSPAFGEAFLTLHPTQYANVLAKKMKEHNATAYLVNTGWNGTNKRISIQDTRAIIDAIIDESIEKAEKIYIPILNLYVPKSLSGVSKGILDPRDTYTNRGEWEEKAKSLAAKYIKNFEQYLPEGEYLISSGPQLS.

Substrate is bound by residues Arg59, Tyr198, and Lys204. Residues Lys204, His223, and 239–247 contribute to the ATP site; that span reads GLSGTGKTT. Mn(2+) is bound by residues Lys204 and His223. Asp260 is a binding site for Mn(2+). Residues Glu288, Arg325, 440–441, and Thr446 each bind ATP; that span reads RI. Arg325 serves as a coordination point for substrate.

This sequence belongs to the phosphoenolpyruvate carboxykinase (ATP) family. Mn(2+) serves as cofactor.

Its subcellular location is the cytoplasm. The enzyme catalyses oxaloacetate + ATP = phosphoenolpyruvate + ADP + CO2. Its pathway is carbohydrate biosynthesis; gluconeogenesis. Functionally, involved in the gluconeogenesis. Catalyzes the conversion of oxaloacetate (OAA) to phosphoenolpyruvate (PEP) through direct phosphoryl transfer between the nucleoside triphosphate and OAA. This is Phosphoenolpyruvate carboxykinase (ATP) from Azobacteroides pseudotrichonymphae genomovar. CFP2.